The chain runs to 417 residues: MSVKPEKPVWMSQEDYDRQYGTVGDGENKTAIVEKTTITTQSSSNVVVGEASKTSSDIGANKIQKRKRHDDFALEEKKRRERERRLREEQLKEHEIKLTAEKITNVNNLVREHYNERTYIANRTKRNQSPIIKLRNFNNAIKFMLIDKFTHTGDVVLELGCGKGGDLRKYGAAGISQFIGIDISNASIQEAHKRYQSMKNLDFQAILITGDCFGESLGVAVEPFPECRFPCDVVSTQFCLHYAFETEEKARRALLNVSKSLKVGGRFFGTIPDSEFLRYKLNKIGKDVQEPKWGNQIYSIKFSNNDYHENGNEFPSPYGQMYTFWLEDAIDNVPEYVVPFETLRSLADEYGMELILQMPFNQFFVQEIPKWVNRFSPKMREGLTRSDGKYGVEGIEKEPAAYLYTVFAFKKVREHVE.

In terms of domain architecture, mRNA cap 0 methyltransferase spans Ser129–Val412. MRNA is bound at residue Asn138–Asn139. S-adenosyl-L-methionine is bound by residues Lys142, Gly160, Asp182, Asp211, Gln237, and Tyr242.

Belongs to the class I-like SAM-binding methyltransferase superfamily. mRNA cap 0 methyltransferase family.

Its subcellular location is the nucleus. It carries out the reaction a 5'-end (5'-triphosphoguanosine)-ribonucleoside in mRNA + S-adenosyl-L-methionine = a 5'-end (N(7)-methyl 5'-triphosphoguanosine)-ribonucleoside in mRNA + S-adenosyl-L-homocysteine. Functionally, responsible for methylating the 5'-cap structure of mRNAs. This Candida glabrata (strain ATCC 2001 / BCRC 20586 / JCM 3761 / NBRC 0622 / NRRL Y-65 / CBS 138) (Yeast) protein is mRNA cap guanine-N(7) methyltransferase (ABD1).